We begin with the raw amino-acid sequence, 286 residues long: Homoserine kinase (286 aa).

Residue 78 to 88 (PLARGLGSSSS) participates in ATP binding.

The protein belongs to the GHMP kinase family. Homoserine kinase subfamily.

The protein localises to the cytoplasm. The enzyme catalyses L-homoserine + ATP = O-phospho-L-homoserine + ADP + H(+). Its pathway is amino-acid biosynthesis; L-threonine biosynthesis; L-threonine from L-aspartate: step 4/5. Functionally, catalyzes the ATP-dependent phosphorylation of L-homoserine to L-homoserine phosphate. The protein is Homoserine kinase of Streptococcus equi subsp. zooepidemicus (strain H70).